The sequence spans 389 residues: MFDKGRSKEDVFRDLNVFHNMDMKYSSGRILGSMCTKPDPVGLEAYKMFIETNLGDPGLFKGTALMEQEVINSLGNLLHLKNPCGHIVTGGTEANIMAMCVAKYLYEEENEGTPELILPKSAHFSFKKVLSMLSVKPVYVPLNNEYKIDVTKLPDLITDNTMAMVGIAGTTELGLVDDIPEISKIAKSYGVYLHVDAALGGFIIPFLNYKNNNQLNFDFKCKGVSSITIDPHKMGLAPVPSGGIIFRKKKYLEKLSIKTPYLTKDKQTTIVGTRTGASTAATWTLLNYHGMEGYKKIVEKVINLTTYTYNKLNKNKHVTIIHKPELNIISFKVDNIDVDTLQKQLQAYGWIVSLAEYPHVIRLVLMPHIKKEHIDEFLVDLDIIIQKNR.

At lysine 233 the chain carries N6-(pyridoxal phosphate)lysine.

The protein belongs to the group II decarboxylase family. MfnA subfamily. It depends on pyridoxal 5'-phosphate as a cofactor.

The enzyme catalyses L-tyrosine + H(+) = tyramine + CO2. The catalysed reaction is L-aspartate + H(+) = beta-alanine + CO2. The protein operates within cofactor biosynthesis; methanofuran biosynthesis. It participates in cofactor biosynthesis; coenzyme A biosynthesis. In terms of biological role, catalyzes the decarboxylation of L-tyrosine to produce tyramine for methanofuran biosynthesis. Can also catalyze the decarboxylation of L-aspartate to produce beta-alanine for coenzyme A (CoA) biosynthesis. The protein is Probable L-tyrosine/L-aspartate decarboxylase of Methanosphaera stadtmanae (strain ATCC 43021 / DSM 3091 / JCM 11832 / MCB-3).